The primary structure comprises 248 residues: Cytochrome c oxidase subunit 2 (248 aa).

Topologically, residues 1 to 43 are mitochondrial intermembrane; the sequence is MTNLLNNWLIINQFGYDLPEPWQLGLQDAAHPVMEEIIFFHDQ. Residues 44-65 form a helical membrane-spanning segment; sequence VMFILIIIITTVLWLIVKALSG. Over 66 to 79 the chain is Mitochondrial matrix; it reads KAYHRYLVDGTLLE. The helical transmembrane segment at 80-99 threads the bilayer; it reads IIWTIVPAIILILIAFPSLK. Residues 100 to 248 lie on the Mitochondrial intermembrane side of the membrane; it reads LLYLMDEVMD…INWVLSGSDE (149 aa). His-180, Cys-215, Glu-217, Cys-219, His-223, and Met-226 together coordinate Cu cation. Glu-217 is a binding site for Mg(2+).

It belongs to the cytochrome c oxidase subunit 2 family. In terms of assembly, component of the cytochrome c oxidase (complex IV, CIV), a multisubunit enzyme composed of a catalytic core of 3 subunits and several supernumerary subunits. The complex exists as a monomer or a dimer and forms supercomplexes (SCs) in the inner mitochondrial membrane with ubiquinol-cytochrome c oxidoreductase (cytochrome b-c1 complex, complex III, CIII). Cu cation is required as a cofactor.

It localises to the mitochondrion inner membrane. It carries out the reaction 4 Fe(II)-[cytochrome c] + O2 + 8 H(+)(in) = 4 Fe(III)-[cytochrome c] + 2 H2O + 4 H(+)(out). In terms of biological role, component of the cytochrome c oxidase, the last enzyme in the mitochondrial electron transport chain which drives oxidative phosphorylation. The respiratory chain contains 3 multisubunit complexes succinate dehydrogenase (complex II, CII), ubiquinol-cytochrome c oxidoreductase (cytochrome b-c1 complex, complex III, CIII) and cytochrome c oxidase (complex IV, CIV), that cooperate to transfer electrons derived from NADH and succinate to molecular oxygen, creating an electrochemical gradient over the inner membrane that drives transmembrane transport and the ATP synthase. Cytochrome c oxidase is the component of the respiratory chain that catalyzes the reduction of oxygen to water. Electrons originating from reduced cytochrome c in the intermembrane space (IMS) are transferred via the dinuclear copper A center (CU(A)) of subunit 2 and heme A of subunit 1 to the active site in subunit 1, a binuclear center (BNC) formed by heme A3 and copper B (CU(B)). The BNC reduces molecular oxygen to 2 water molecules using 4 electrons from cytochrome c in the IMS and 4 protons from the mitochondrial matrix. The protein is Cytochrome c oxidase subunit 2 (COII) of Metridium senile (Brown sea anemone).